The following is a 412-amino-acid chain: Putative competence-damage inducible protein (412 aa).

Belongs to the CinA family.

This chain is Putative competence-damage inducible protein, found in Bacillus cereus (strain ATCC 10987 / NRS 248).